A 317-amino-acid polypeptide reads, in one-letter code: Apolipoprotein E (317 aa).

The first 18 residues, 1-18, serve as a signal peptide directing secretion; sequence MRVLWVALVVTLLAGCRT. A run of 8 repeats spans residues 79 to 100, 101 to 122, 123 to 144, 145 to 166, 167 to 188, 189 to 210, 211 to 232, and 233 to 254. The interval 79-254 is 8 X 22 AA approximate tandem repeats; sequence ELIEESMKEV…RLDEMRDELE (176 aa). Methionine 142 carries the methionine sulfoxide modification. An LDL and other lipoprotein receptors binding region spans residues 157–167; that stretch reads HLRNVRKRLVR. 161–164 provides a ligand contact to heparin; the sequence is VRKR. Residues 209–289 are lipid-binding and lipoprotein association; sequence AATLSTRAGQ…GWFEPLVEDM (81 aa). 228 to 235 contributes to the heparin binding site; the sequence is GQKLRGRL. The interval 265 to 317 is homooligomerization; the sequence is SQLRLQAEAFQARLKGWFEPLVEDMRRQWAGLVERMQSAVSISSSTSAPSDNQ. The specificity for association with VLDL stretch occupies residues 277 to 289; the sequence is RLKGWFEPLVEDM.

Belongs to the apolipoprotein A1/A4/E family. In terms of assembly, homotetramer. May interact with ABCA1; functionally associated with ABCA1 in the biogenesis of HDLs. May interact with APP/A4 amyloid-beta peptide; the interaction is extremely stable in vitro but its physiological significance is unclear. May interact with MAPT. May interact with MAP2. In the cerebrospinal fluid, interacts with secreted SORL1. Interacts with PMEL; this allows the loading of PMEL luminal fragment on ILVs to induce fibril nucleation. In terms of processing, APOE exists as multiple glycosylated and sialylated glycoforms within cells and in plasma. The extent of glycosylation and sialylation are tissue and context specific. Post-translationally, glycated in plasma VLDL. Phosphorylated by FAM20C in the extracellular medium.

It is found in the secreted. It localises to the extracellular space. The protein localises to the extracellular matrix. The protein resides in the extracellular vesicle. Its subcellular location is the endosome. It is found in the multivesicular body. In terms of biological role, APOE is an apolipoprotein, a protein associating with lipid particles, that mainly functions in lipoprotein-mediated lipid transport between organs via the plasma and interstitial fluids. APOE is a core component of plasma lipoproteins and is involved in their production, conversion and clearance. Apolipoproteins are amphipathic molecules that interact both with lipids of the lipoprotein particle core and the aqueous environment of the plasma. As such, APOE associates with chylomicrons, chylomicron remnants, very low density lipoproteins (VLDL) and intermediate density lipoproteins (IDL) but shows a preferential binding to high-density lipoproteins (HDL). It also binds a wide range of cellular receptors including the LDL receptor/LDLR and the very low-density lipoprotein receptor/VLDLR that mediate the cellular uptake of the APOE-containing lipoprotein particles. Finally, APOE also has a heparin-binding activity and binds heparan-sulfate proteoglycans on the surface of cells, a property that supports the capture and the receptor-mediated uptake of APOE-containing lipoproteins by cells. This is Apolipoprotein E (APOE) from Sus scrofa (Pig).